An 841-amino-acid polypeptide reads, in one-letter code: MAP7 domain-containing protein 1 (841 aa).

Disordered regions lie at residues 1–151 and 184–208; these read MESG…ERAK and EQRL…EKNK. The span at 22–52 shows a compositional bias: pro residues; that stretch reads PPEPRPSPEGDPSPPPPPMSALVPDTPPDTP. Phosphothreonine is present on residues Thr-47 and Thr-51. Ser-70, Ser-86, and Ser-93 each carry phosphoserine. A Phosphothreonine modification is found at Thr-97. Ser-113 and Ser-116 each carry phosphoserine. Thr-118 carries the phosphothreonine modification. A phosphoserine mark is found at Ser-123 and Ser-125. Residues 128–222 are a coiled coil; sequence TKQEVKKAGE…AAIQRSVKKT (95 aa). Basic and acidic residues predominate over residues 130-151; sequence QEVKKAGERHKLAKERREERAK. Phosphoserine is present on residues Ser-254, Ser-273, Ser-313, Ser-366, and Ser-399. The tract at residues 316-813 is disordered; the sequence is TLPRNGRDQG…PSGDKSLSRT (498 aa). The span at 365–377 shows a compositional bias: polar residues; that stretch reads ASASPLTPCSVTR. A compositionally biased stretch (basic and acidic residues) spans 405–435; the sequence is RRPEASPVQKKEKKDKERENEKEKSALARER. Residues 412-441 adopt a coiled-coil conformation; the sequence is VQKKEKKDKERENEKEKSALARERSLKKRQ. Phosphoserine is present on residues Ser-442, Ser-446, Ser-452, Ser-454, and Ser-460. Positions 460-473 are enriched in low complexity; the sequence is SPKSKARPSSPSTS. Residue Lys-462 forms a Glycyl lysine isopeptide (Lys-Gly) (interchain with G-Cter in SUMO2) linkage. Ser-479 and Ser-496 each carry phosphoserine. Residues 479 to 497 show a composition bias toward pro residues; that stretch reads SPCPSPGPGHTLPPKPPSP. The segment covering 523–539 has biased composition (basic and acidic residues); that stretch reads PEDKSQSKRRASNEKES. Ser-544, Ser-548, and Ser-552 each carry phosphoserine. The span at 544–561 shows a compositional bias: pro residues; the sequence is SPAPSPAPSPTPAPPQKE. The residue at position 554 (Thr-554) is a Phosphothreonine. The segment covering 562–576 has biased composition (low complexity); it reads QPPAETPTDAAVLTS. A compositionally biased stretch (pro residues) spans 577 to 586; sequence PPAPAPPVTP. Residues 593-721 adopt a coiled-coil conformation; that stretch reads TTDREEATRL…LEEIMKRTRK (129 aa). The segment covering 594 to 735 has biased composition (basic and acidic residues); the sequence is TDREEATRLL…ETKQKQDSKE (142 aa). Phosphoserine occurs at positions 742 and 753. Residues Thr-813 and Thr-816 each carry the phosphothreonine modification. Ser-834 carries the post-translational modification Phosphoserine.

It belongs to the MAP7 family.

Its subcellular location is the cytoplasm. It localises to the cytoskeleton. The protein localises to the spindle. The protein resides in the microtubule organizing center. It is found in the centrosome. Its subcellular location is the midbody. In terms of biological role, microtubule-stabilizing protein involved in the control of cell motility and neurite outgrowth. Facilitate microtubule stabilization through the maintenance of acetylated stable microtubules. This is MAP7 domain-containing protein 1 (MAP7D1) from Homo sapiens (Human).